Here is a 1575-residue protein sequence, read N- to C-terminus: Lysophospholipase NTE1 (1575 aa).

Positions 1–56 (MNLTTTMPAAVAPDPPAQLAVSSRSLSDSSDAAGASRTSSSCRASSPSHCPTHAWN) are disordered. At 1 to 99 (MNLTTTMPAA…TLSPPNLLQG (99 aa)) the chain is on the cytoplasmic side. Residues 19–48 (LAVSSRSLSDSSDAAGASRTSSSCRASSPS) show a composition bias toward low complexity. A helical membrane pass occupies residues 100–120 (IVSQLAMASYIGRLLLYLFQV). Residues 121–151 (VPSLLYWAITFTTITVPTALFTLFSMSLTFT) lie on the Lumenal side of the membrane. Residues 152–172 (MNFTTLLIIVLLLVSTVSWFI) form a helical membrane-spanning segment. At 173 to 1575 (RYRFLNIYSR…RTMAPRRASI (1403 aa)) the chain is on the cytoplasmic side. Disordered stretches follow at residues 339 to 425 (DMES…AKSV) and 568 to 587 (GSASNPIRYGDHESTGVSPG). Basic residues predominate over residues 409 to 424 (RGHRRKRPSRPKRAKS). A nucleoside 3',5'-cyclic phosphate is bound by residues 737–856 (GGTS…TSYR) and 894–1014 (RLTT…IAQR). A PNPLA domain is found at 1272–1436 (LVLGGGGARG…VDNLTVARMK (165 aa)). The GXGXXG signature appears at 1276–1281 (GGGARG). A GXSXG motif is present at residues 1303–1307 (GTSIG). Ser1305 (nucleophile) is an active-site residue. Asp1423 acts as the Proton acceptor in catalysis. Positions 1423–1425 (DGG) match the DGA/G motif.

It belongs to the NTE family.

Its subcellular location is the endoplasmic reticulum membrane. The enzyme catalyses a 1-acyl-sn-glycero-3-phosphocholine + H2O = sn-glycerol 3-phosphocholine + a fatty acid + H(+). Its activity is regulated as follows. Inhibited by organophosphorus esters. Intracellular phospholipase B that catalyzes the double deacylation of phosphatidylcholine (PC) to glycerophosphocholine (GroPCho). Plays an important role in membrane lipid homeostasis. Responsible for the rapid PC turnover in response to inositol, elevated temperatures, or when choline is present in the growth medium. This is Lysophospholipase NTE1 (NTE1) from Coccidioides immitis (strain RS) (Valley fever fungus).